The primary structure comprises 238 residues: B-box zinc finger protein 25 (238 aa).

Zn(2+) contacts are provided by Cys5, Cys8, Cys28, His33, Cys57, Cys60, Cys80, and His85. The B box-type 1; atypical zinc-finger motif lies at 5-47; the sequence is CDVCEKAPATLICCADEAALCAKCDVEVHAANKLASKHQRLFL. The B box-type 2; atypical zinc-finger motif lies at 57-99; that stretch reads CDICLEKAAFIFCVEDRALLCRDCDEATHAPNTRSANHQRFLA. Residues 115–139 form a disordered region; that stretch reads VEKNHFDPSNQQSLSKPPTQQPAAP. A compositionally biased stretch (polar residues) spans 121 to 137; that stretch reads DPSNQQSLSKPPTQQPA. The segment at 226-238 is interaction with COP1; it reads DDEEEHFLVPDLG.

Interacts with COP1 WD40 domain. Interacts with HY5 and HYH. In terms of processing, COP1-mediated ubiquitination and subsequent proteasomal degradation of BBX25/STH occurs in the dark.

The protein localises to the nucleus. In terms of biological role, acts as a negative regulator of seedling photomorphogenesis. BBX25/STH and BBX24/STO function as transcriptional corepressors of HY5 activity, leading to the down-regulation of BBX22 expression. BBX25/STH acts additively with BBX24/STO during de-etiolation and the hypocotyl shade avoidance response. This chain is B-box zinc finger protein 25, found in Arabidopsis thaliana (Mouse-ear cress).